A 1485-amino-acid chain; its full sequence is Cystic fibrosis transmembrane conductance regulator (1485 aa).

Residues 1 to 78 (MQKTPLEKAS…KLINALKRCF (78 aa)) lie on the Cytoplasmic side of the membrane. The helical transmembrane segment at 79-99 (FWKFLFYGILLYLGEVTKAVQ) threads the bilayer. The 285-residue stretch at 82 to 366 (FLFYGILLYL…WAVQTWYDSL (285 aa)) folds into the ABC transmembrane type-1 1 domain. Over 100–123 (PLLLGRIIASYDRDNEHERSIAYY) the chain is Extracellular. A helical membrane pass occupies residues 124-147 (LAIGLCLLFVVRMLLLHPAIFGLH). At 148 to 196 (HIGMQMRIAMFSLIYKKTLKLSSKVLDKISTGQLVSLLSNNLNKFDEGL) the chain is on the cytoplasmic side. Residues 197–217 (ALAHFVWIAPLQVLLLMGLLW) form a helical membrane-spanning segment. Over 218–223 (DLLQAS) the chain is Extracellular. Residues 224-244 (AFCGLGFLIILSLFQARLGRM) form a helical membrane-spanning segment. Over 245 to 299 (MMKYKDKRAGKINERLVITSQIIENIQSVKAYCWENAMEKIIETIRETELKLTRK) the chain is Cytoplasmic. The helical transmembrane segment at 300–320 (AAYVRYFNSSAFFFSGFFVVF) threads the bilayer. Topologically, residues 321–340 (LSIVPHLLLDGISLRKIFTT) are extracellular. A helical transmembrane segment spans residues 341–359 (ISFSIVLRMAVTRQFPWAV). The Cytoplasmic segment spans residues 360 to 860 (QTWYDSLGVI…YLRFLTAHKN (501 aa)). ATP-binding positions include Trp-402, Ser-435, 459–466 (GSTGAGKT), and Gln-494. The 226-residue stretch at 422–647 (ISNEDPSAFF…RPEFSSHLIG (226 aa)) folds into the ABC transporter 1 domain. Residues 652-833 (NAERRNSIIT…EEINEEDLKE (182 aa)) form a disordered R region region. Over residues 750–760 (PRSNFLNTGPT) the composition is skewed to polar residues. A helical transmembrane segment spans residues 861–881 (FIFILVFCLVIFFVEVAASSA). The ABC transmembrane type-1 2 domain occupies 880 to 1163 (SAWLWIIKRN…ASIDVDSLMR (284 aa)). The Extracellular segment spans residues 882–923 (WLWIIKRNAPAINMTSNENVSEVSDTLSVIVTHTSFYYVFYI). N-linked (GlcNAc...) asparagine glycans are attached at residues Asn-894 and Asn-900. A discontinuously helical membrane pass occupies residues 924–944 (YVGVADSLLALGIFRGLPLVH). Residues 945 to 995 (SLISVSKVLHKKMLHAILHAPMSTFNTMRAGRILNRFSKDTAILDDILPLS) are Cytoplasmic-facing. A helical transmembrane segment spans residues 996–1016 (IFDLTQLVLIVIGAITVVSLL). Residues 1017-1018 (EP) lie on the Extracellular side of the membrane. A helical membrane pass occupies residues 1019 to 1039 (YIFLATVPVIVAFILLRSYFL). The Cytoplasmic segment spans residues 1040–1100 (HTSQQLKQLE…TANWFLYLST (61 aa)). A helical membrane pass occupies residues 1101–1121 (LRWFQMTIEMIFVIFFIAVSF). The Extracellular segment spans residues 1122 to 1135 (ISIATSGAGEEKVG). The chain crosses the membrane as a helical span at residues 1136–1156 (IVLTLAMNIMNTLQWAVNASI). At 1157–1485 (DVDSLMRSVS…TEEEVQDTRL (329 aa)) the chain is on the cytoplasmic side. The ABC transporter 2 domain occupies 1213 to 1446 (MTVKNLSANY…KSFFKQAISH (234 aa)). ATP-binding positions include Tyr-1222 and 1247–1254 (GRTGSGKS). Residues 1458–1485 (RNSSKRKSRPQISALQEETEEEVQDTRL) are disordered. Positions 1474–1485 (EETEEEVQDTRL) are enriched in acidic residues. The PDZ-binding motif lies at 1483-1485 (TRL).

This sequence belongs to the ABC transporter superfamily. ABCC family. CFTR transporter (TC 3.A.1.202) subfamily. Monomer; does not require oligomerization for channel activity. May form oligomers in the membrane. In terms of processing, phosphorylated; cAMP treatment promotes phosphorylation and activates the channel. Dephosphorylation decreases the ATPase activity (in vitro). Phosphorylation at PKA sites activates the channel. Phosphorylation at PKC sites enhances the response to phosphorylation by PKA.

The protein localises to the apical cell membrane. It localises to the early endosome membrane. The protein resides in the cell membrane. Its subcellular location is the recycling endosome membrane. It is found in the endoplasmic reticulum membrane. It catalyses the reaction ATP + H2O + closed Cl(-) channel = ADP + phosphate + open Cl(-) channel.. The enzyme catalyses chloride(in) = chloride(out). The catalysed reaction is hydrogencarbonate(in) = hydrogencarbonate(out). It carries out the reaction ATP + H2O = ADP + phosphate + H(+). Epithelial ion channel that plays an important role in the regulation of epithelial ion and water transport and fluid homeostasis. Mediates the transport of chloride ions across the cell membrane. Possesses an intrinsic ATPase activity and utilizes ATP to gate its channel; the passive flow of anions through the channel is gated by cycles of ATP binding and hydrolysis by the ATP-binding domains. The ion channel is also permeable to HCO(3)(-); selectivity depends on the extracellular chloride concentration. Exerts its function also by modulating the activity of other ion channels and transporters. Contributes to the regulation of the pH and the ion content of the epithelial fluid layer. The chain is Cystic fibrosis transmembrane conductance regulator from Xenopus laevis (African clawed frog).